Here is a 201-residue protein sequence, read N- to C-terminus: Inosine triphosphate pyrophosphatase (201 aa).

16 to 21 (TGNAKK) provides a ligand contact to ITP. Glu44 serves as a coordination point for Mg(2+). ITP contacts are provided by residues Lys56, 72-73 (DT), Lys89, 148-151 (FGWD), Lys171, and 176-177 (HR).

Belongs to the HAM1 NTPase family. In terms of assembly, homodimer. It depends on Mg(2+) as a cofactor. Requires Mn(2+) as cofactor.

The protein resides in the cytoplasm. It catalyses the reaction ITP + H2O = IMP + diphosphate + H(+). The enzyme catalyses dITP + H2O = dIMP + diphosphate + H(+). The catalysed reaction is XTP + H2O = XMP + diphosphate + H(+). Its function is as follows. Pyrophosphatase that hydrolyzes non-canonical purine nucleotides such as inosine triphosphate (ITP), deoxyinosine triphosphate (dITP) or xanthosine 5'-triphosphate (XTP) to their respective monophosphate derivatives. The enzyme does not distinguish between the deoxy- and ribose forms. Probably excludes non-canonical purines from RNA and DNA precursor pools, thus preventing their incorporation into RNA and DNA and avoiding chromosomal lesions. In Zea mays (Maize), this protein is Inosine triphosphate pyrophosphatase.